Consider the following 387-residue polypeptide: Colicin-N (387 aa).

Residues 1–11 (MGSNGADNAHN) are compositionally biased toward polar residues. The interval 1-106 (MGSNGADNAH…ITITPDNSKP (106 aa)) is disordered. A compositionally biased stretch (gly residues) spans 14–30 (FGGGKNPGIGNTSGAGS). Positions 31–48 (NGSASSNRGNSNGWSWSN) are enriched in low complexity. Residues 78 to 87 (GNSGNRGNNG) are compositionally biased toward gly residues. Transmembrane regions (helical) follow at residues 325-345 (IIGG…LSFL) and 350-370 (LAVT…SSFI).

The protein belongs to the channel forming colicin family.

It is found in the cell membrane. In terms of biological role, this colicin is a channel-forming colicin. This class of transmembrane toxins depolarize the cytoplasmic membrane, leading to dissipation of cellular energy. Its function is as follows. Colicins are polypeptide toxins produced by and active against E.coli and closely related bacteria. The polypeptide is Colicin-N (cna) (Escherichia coli).